Consider the following 59-residue polypeptide: Large ribosomal subunit protein bL32c (59 aa).

A compositionally biased stretch (basic residues) spans 1 to 19; the sequence is MAVPKKRTSKAKKNARKAN. Residues 1-24 form a disordered region; sequence MAVPKKRTSKAKKNARKANWKNQA.

The protein belongs to the bacterial ribosomal protein bL32 family.

The protein localises to the plastid. It localises to the chloroplast. This chain is Large ribosomal subunit protein bL32c (rpl32), found in Porphyra purpurea (Red seaweed).